The following is a 706-amino-acid chain: DNA ligase (706 aa).

Residues 40–44, 89–90, and Glu-120 each bind NAD(+); these read DLQYD and SI. The active-site N6-AMP-lysine intermediate is the Lys-122. Positions 143, 190, 306, and 330 each coordinate NAD(+). Residues Cys-424, Cys-427, Cys-442, and Cys-447 each contribute to the Zn(2+) site. The 82-residue stretch at 625-706 folds into the BRCT domain; that stretch reads EANLPLAGKN…FRLRYETEAT (82 aa).

This sequence belongs to the NAD-dependent DNA ligase family. LigA subfamily. Mg(2+) serves as cofactor. The cofactor is Mn(2+).

The enzyme catalyses NAD(+) + (deoxyribonucleotide)n-3'-hydroxyl + 5'-phospho-(deoxyribonucleotide)m = (deoxyribonucleotide)n+m + AMP + beta-nicotinamide D-nucleotide.. Its function is as follows. DNA ligase that catalyzes the formation of phosphodiester linkages between 5'-phosphoryl and 3'-hydroxyl groups in double-stranded DNA using NAD as a coenzyme and as the energy source for the reaction. It is essential for DNA replication and repair of damaged DNA. The sequence is that of DNA ligase from Rhodopirellula baltica (strain DSM 10527 / NCIMB 13988 / SH1).